We begin with the raw amino-acid sequence, 427 residues long: Glutamate-1-semialdehyde 2,1-aminomutase (427 aa).

K265 carries the post-translational modification N6-(pyridoxal phosphate)lysine.

Belongs to the class-III pyridoxal-phosphate-dependent aminotransferase family. HemL subfamily. In terms of assembly, homodimer. Requires pyridoxal 5'-phosphate as cofactor.

The protein resides in the cytoplasm. The catalysed reaction is (S)-4-amino-5-oxopentanoate = 5-aminolevulinate. It participates in porphyrin-containing compound metabolism; protoporphyrin-IX biosynthesis; 5-aminolevulinate from L-glutamyl-tRNA(Glu): step 2/2. This Pseudomonas fluorescens (strain SBW25) protein is Glutamate-1-semialdehyde 2,1-aminomutase.